The following is a 692-amino-acid chain: DNA-binding protein RFX2 (692 aa).

The interval 1-26 (MQNSEGGADSPATVALRPAAQPVPAS) is disordered. S26 is modified (phosphoserine). The RFX-type winged-helix DNA-binding region spans 169–244 (TLQWLLDNYE…YHYYGIRLKP (76 aa)). The tract at residues 261 to 296 (RQQPTHQKPRYRPAQKSDSLGDGSAHSNMHSTPEQA) is disordered. Polar residues predominate over residues 285–294 (AHSNMHSTPE). Phosphoserine is present on S386. The segment covering 660-685 (DGHSSEADVDGRSLGEPLVKRERSDP) has biased composition (basic and acidic residues). A disordered region spans residues 660 to 692 (DGHSSEADVDGRSLGEPLVKRERSDPSHPLQGI).

The protein belongs to the RFX family. Homodimer; probably only forms homodimers in testis. Heterodimer; heterodimerizes with RFX1 and RFX3. In terms of tissue distribution, expressed at highest level in testis. Expressed at lower level in thymus. Also expressed in stomach, kidney, liver, brain and heart. Weakly expressed in spleen and lung. Within testis, most abundantly present in spermatocytes: present from pachytene spermatocytes to early spermatids (at protein level). Also present in non-germinal tissues.

Its subcellular location is the nucleus. It localises to the cytoplasm. Transcription factor that acts as a key regulator of spermatogenesis. Acts by regulating expression of genes required for the haploid phase during spermiogenesis, such as genes required for cilium assembly and function. Recognizes and binds the X-box, a regulatory motif with DNA sequence 5'-GTNRCC(0-3N)RGYAAC-3' present on promoters. Probably activates transcription of the testis-specific histone gene H1-6. The chain is DNA-binding protein RFX2 (Rfx2) from Rattus norvegicus (Rat).